Here is a 186-residue protein sequence, read N- to C-terminus: Ribosome-recycling factor (186 aa).

Belongs to the RRF family.

Its subcellular location is the cytoplasm. Its function is as follows. Responsible for the release of ribosomes from messenger RNA at the termination of protein biosynthesis. May increase the efficiency of translation by recycling ribosomes from one round of translation to another. This Rickettsia typhi (strain ATCC VR-144 / Wilmington) protein is Ribosome-recycling factor.